Consider the following 283-residue polypeptide: Elongation factor Ts (283 aa).

The tract at residues 80–83 is involved in Mg(2+) ion dislocation from EF-Tu; that stretch reads TDFV.

This sequence belongs to the EF-Ts family.

The protein resides in the cytoplasm. Its function is as follows. Associates with the EF-Tu.GDP complex and induces the exchange of GDP to GTP. It remains bound to the aminoacyl-tRNA.EF-Tu.GTP complex up to the GTP hydrolysis stage on the ribosome. This is Elongation factor Ts from Actinobacillus pleuropneumoniae serotype 5b (strain L20).